The chain runs to 363 residues: 3-isopropylmalate dehydrogenase (363 aa).

An NAD(+)-binding site is contributed by 78–91 (GPKWEHLPPDQQPE). R99, R109, R138, and D227 together coordinate substrate. Residues D227, D251, and D255 each coordinate Mg(2+). 285–297 (GSAPDIAGKNIAN) contributes to the NAD(+) binding site.

It belongs to the isocitrate and isopropylmalate dehydrogenases family. LeuB type 1 subfamily. Homodimer. It depends on Mg(2+) as a cofactor. Mn(2+) is required as a cofactor.

Its subcellular location is the cytoplasm. It carries out the reaction (2R,3S)-3-isopropylmalate + NAD(+) = 4-methyl-2-oxopentanoate + CO2 + NADH. It functions in the pathway amino-acid biosynthesis; L-leucine biosynthesis; L-leucine from 3-methyl-2-oxobutanoate: step 3/4. Its function is as follows. Catalyzes the oxidation of 3-carboxy-2-hydroxy-4-methylpentanoate (3-isopropylmalate) to 3-carboxy-4-methyl-2-oxopentanoate. The product decarboxylates to 4-methyl-2 oxopentanoate. In Shigella sonnei (strain Ss046), this protein is 3-isopropylmalate dehydrogenase.